The primary structure comprises 291 residues: ATP synthase gamma chain (291 aa).

It belongs to the ATPase gamma chain family. As to quaternary structure, F-type ATPases have 2 components, CF(1) - the catalytic core - and CF(0) - the membrane proton channel. CF(1) has five subunits: alpha(3), beta(3), gamma(1), delta(1), epsilon(1). CF(0) has three main subunits: a, b and c.

The protein resides in the cell inner membrane. Functionally, produces ATP from ADP in the presence of a proton gradient across the membrane. The gamma chain is believed to be important in regulating ATPase activity and the flow of protons through the CF(0) complex. This Nitratidesulfovibrio vulgaris (strain ATCC 29579 / DSM 644 / CCUG 34227 / NCIMB 8303 / VKM B-1760 / Hildenborough) (Desulfovibrio vulgaris) protein is ATP synthase gamma chain.